Reading from the N-terminus, the 70-residue chain is Small ribosomal subunit protein bS21 (70 aa).

This sequence belongs to the bacterial ribosomal protein bS21 family.

In Wolinella succinogenes (strain ATCC 29543 / DSM 1740 / CCUG 13145 / JCM 31913 / LMG 7466 / NCTC 11488 / FDC 602W) (Vibrio succinogenes), this protein is Small ribosomal subunit protein bS21.